A 314-amino-acid chain; its full sequence is Altered inheritance of mitochondria protein 6 homolog ARB_06966 (314 aa).

A signal peptide spans 1–21 (MKSSILASAAILAASLEPVAA). Asparagine 91 and asparagine 184 each carry an N-linked (GlcNAc...) asparagine glycan.

The protein belongs to the AIM6 family.

The protein resides in the secreted. This chain is Altered inheritance of mitochondria protein 6 homolog ARB_06966, found in Arthroderma benhamiae (strain ATCC MYA-4681 / CBS 112371) (Trichophyton mentagrophytes).